The sequence spans 101 residues: Large ribosomal subunit protein bL25 (101 aa).

This sequence belongs to the bacterial ribosomal protein bL25 family. As to quaternary structure, part of the 50S ribosomal subunit; part of the 5S rRNA/L5/L18/L25 subcomplex. Contacts the 5S rRNA. Binds to the 5S rRNA independently of L5 and L18.

Its function is as follows. This is one of the proteins that binds to the 5S RNA in the ribosome where it forms part of the central protuberance. This chain is Large ribosomal subunit protein bL25, found in Thermosynechococcus vestitus (strain NIES-2133 / IAM M-273 / BP-1).